A 276-amino-acid chain; its full sequence is Proteasome chaperone 1 (276 aa).

This sequence belongs to the PSMG1 family. In terms of assembly, component of the 20S proteasome chaperone. Forms a heterodimer with ADD66 that binds to proteasome precursors.

It localises to the cytoplasm. Its function is as follows. Involved in 20S proteasome assembly. The protein is Proteasome chaperone 1 (PBA1) of Saccharomyces cerevisiae (strain ATCC 204508 / S288c) (Baker's yeast).